A 365-amino-acid chain; its full sequence is D-alanine--D-alanine ligase (365 aa).

Residues 156–360 enclose the ATP-grasp domain; the sequence is KKLMAAEGLP…YAQLLDNLIE (205 aa). Residue 183 to 238 coordinates ATP; sequence KRELGLPVFVKPARGGSSIGISRVADWSEWDAALSLAREHDSKVIVEAEIVGVEVE. Mg(2+)-binding residues include Asp-315, Glu-327, and Asn-329.

It belongs to the D-alanine--D-alanine ligase family. Mg(2+) serves as cofactor. Mn(2+) is required as a cofactor.

It is found in the cytoplasm. The catalysed reaction is 2 D-alanine + ATP = D-alanyl-D-alanine + ADP + phosphate + H(+). It participates in cell wall biogenesis; peptidoglycan biosynthesis. Its function is as follows. Cell wall formation. This chain is D-alanine--D-alanine ligase, found in Corynebacterium diphtheriae (strain ATCC 700971 / NCTC 13129 / Biotype gravis).